A 201-amino-acid chain; its full sequence is Peptide deformylase (201 aa).

2 residues coordinate Fe cation: C121 and H163. E164 is an active-site residue. Position 167 (H167) interacts with Fe cation.

Belongs to the polypeptide deformylase family. Requires Fe(2+) as cofactor.

It catalyses the reaction N-terminal N-formyl-L-methionyl-[peptide] + H2O = N-terminal L-methionyl-[peptide] + formate. Its function is as follows. Removes the formyl group from the N-terminal Met of newly synthesized proteins. Requires at least a dipeptide for an efficient rate of reaction. N-terminal L-methionine is a prerequisite for activity but the enzyme has broad specificity at other positions. This is Peptide deformylase from Synechococcus sp. (strain CC9605).